Consider the following 872-residue polypeptide: uncharacterized protein (872 aa).

Residues 496 to 524 are a coiled coil; the sequence is LQQHHQDISAMQQQILEEKNQLRRATIDV. 2 disordered regions span residues 595–736 and 844–872; these read RPAV…SVQQ and TKEN…PQAV. 2 stretches are compositionally biased toward polar residues: residues 615–659 and 670–686; these read QNGN…QTTF and PYAS…NNVV. Residues 687 to 736 are compositionally biased toward low complexity; sequence QQYQSYYDNPSNQQSNQQSNQQSNQQPNQQPNQQPNQQPNQQPNQQSVQQ.

It is found in the virion. This is an uncharacterized protein from Acanthamoeba polyphaga mimivirus (APMV).